The following is a 569-amino-acid chain: Phosphatase and actin regulator 2 (569 aa).

Positions 1-13 are enriched in polar residues; the sequence is MGQTSVSALSPQP. Residues 1–47 are disordered; the sequence is MGQTSVSALSPQPGSVDGLDKASIANSDGPPAGSQTPPFKRKGKLST. S27 is subject to Phosphoserine. Position 36 is a phosphothreonine (T36). Residues 71 to 96 form an RPEL 1 repeat; that stretch reads AVLERKISTRQSREELIRRGLLKELP. 2 disordered regions span residues 98-253 and 295-483; these read QDGD…TGKP and PTLP…QEAK. Residues 140 to 151 are compositionally biased toward basic and acidic residues; that stretch reads GPPREEQAEEKT. The span at 162 to 176 shows a compositional bias: low complexity; it reads GSKASSSPSASSTSS. Positions 212 to 224 are enriched in polar residues; it reads LSPNTVTSETSSL. S357 bears the Phosphoserine mark. The segment covering 386–399 has biased composition (acidic residues); that stretch reads TDDDDEEDDDDDST. RPEL repeat units follow at residues 412 to 437, 450 to 475, and 488 to 513; these read DTLA…QRTS, TKLV…KQKN, and RRLS…RFNE. Basic and acidic residues predominate over residues 423–444; sequence SKKELEDKNILQRTSEEERQEL. The residue at position 457 (S457) is a Phosphoserine. The segment covering 461 to 483 has biased composition (basic and acidic residues); that stretch reads TTEELEQRSILKQKNEEEEQEAK. At S495 the chain carries Phosphoserine.

The protein belongs to the phosphatase and actin regulator family. As to quaternary structure, binds PPP1CA and actin. Expressed in the brain with high levels in the cerebellum, specifically in the Purkinje cell layer, choroid plexus and thalamus (ventral, rhomboid and anterior nuclei). Moderate to high expression in the hippocampus, piriform cortex, olfactory bulb, entorhinal cortex, as well as in geniculate bodies, lamboid septal zone, preoptic area and ventral pallidum (at protein level).

This chain is Phosphatase and actin regulator 2 (Phactr2), found in Rattus norvegicus (Rat).